A 485-amino-acid chain; its full sequence is Glutamyl-tRNA(Gln) amidotransferase subunit A (485 aa).

Active-site charge relay system residues include Lys78 and Ser153. Ser177 serves as the catalytic Acyl-ester intermediate.

Belongs to the amidase family. GatA subfamily. As to quaternary structure, heterotrimer of A, B and C subunits.

The catalysed reaction is L-glutamyl-tRNA(Gln) + L-glutamine + ATP + H2O = L-glutaminyl-tRNA(Gln) + L-glutamate + ADP + phosphate + H(+). Functionally, allows the formation of correctly charged Gln-tRNA(Gln) through the transamidation of misacylated Glu-tRNA(Gln) in organisms which lack glutaminyl-tRNA synthetase. The reaction takes place in the presence of glutamine and ATP through an activated gamma-phospho-Glu-tRNA(Gln). This is Glutamyl-tRNA(Gln) amidotransferase subunit A from Bacillus cereus (strain AH820).